Reading from the N-terminus, the 153-residue chain is UPF0260 protein YcgN (153 aa).

It belongs to the UPF0260 family.

The sequence is that of UPF0260 protein YcgN from Escherichia coli O6:K15:H31 (strain 536 / UPEC).